The chain runs to 514 residues: Coiled-coil domain-containing protein 174 (514 aa).

Disordered stretches follow at residues 42-83 and 137-162; these read AKPK…DQSR and TLEK…PDEE. Residues 63 to 83 show a composition bias toward basic and acidic residues; it reads KRAEKDIEQKAEEDQTLDQSR. Residues 66–98 are a coiled coil; that stretch reads EKDIEQKAEEDQTLDQSRKKLEEKAKLYEKMTK. Residues 141–162 show a composition bias toward acidic residues; that stretch reads ETDDEEIEPEMEIPPPEDPDEE. Coiled-coil stretches lie at residues 203–227 and 266–321; these read LLSE…ALRK and LDML…LENG. 2 disordered regions span residues 270–291 and 306–490; these read REQT…KAAL and LREE…PSAH. Basic and acidic residues-rich tracts occupy residues 335 to 354 and 376 to 388; these read EVPR…RDTK and KKQE…RDPE. Polar residues predominate over residues 405-418; it reads YSSQNLNSPETSPG. A compositionally biased stretch (basic and acidic residues) spans 420 to 429; that stretch reads TEPEISENQK.

The protein resides in the nucleus. Its function is as follows. Probably involved in neuronal development. This Gallus gallus (Chicken) protein is Coiled-coil domain-containing protein 174 (CCDC174).